Consider the following 4911-residue polypeptide: Histone-lysine N-methyltransferase 2C (4911 aa).

Positions 1–101 (MSSEEDKSVE…EDAEAEVDNS (101 aa)) are disordered. The span at 12–28 (PQPPPPPPEEPGAPAPS) shows a compositional bias: pro residues. Phosphoserine is present on residues Ser-28 and Ser-46. Positions 34–46 (KRPRGRPRKDGAS) form a DNA-binding region, a.T hook. The span at 50–59 (RARKKPRSRG) shows a compositional bias: basic residues. Positions 64-81 (EDEDSMDGLETTETETIV) are enriched in acidic residues. Ser-89 carries the post-translational modification Phosphoserine. A coiled-coil region spans residues 92-112 (EDAEAEVDNSKQLIPTLQRSV). Ser-113 is modified (phosphoserine). A disordered region spans residues 164-203 (RNQPSNKKDIDDNSNGTYEKMQNSAPRKQRGQRKERSPQQ). The segment covering 176 to 189 (NSNGTYEKMQNSAP) has biased composition (polar residues). The residue at position 200 (Ser-200) is a Phosphoserine. A C2HC pre-PHD-type 1; degenerate zinc finger spans residues 227–262 (ELSLVGLPDAIDIQALFDSTGTCWAHHRCVEWSLGV). 4 PHD-type zinc fingers span residues 283-331 (ERCA…PEHI), 341-391 (DANC…CKVC), 388-438 (CKVC…CRIC), and 464-520 (DNLC…CKHL). Residues 344–389 (CAVCDSPGDLLDQFFCTTCGQHYHGMCLDIAVTPLKRAGWQCPECK) form an RING-type zinc finger. The DHHC domain occupies 436–489 (RICIECGTRSSSQWHHNCLICDNCYQQQDNLCPFCGKCYHPELQKDMLHCNMCK). Residues 644-672 (EDKMEVTENIEVVTHQITVQQEQLQLLEE) adopt a coiled-coil conformation. Positions 721–730 (QGEKEQKENS) are enriched in basic and acidic residues. Residues 721–742 (QGEKEQKENSELSTGLMDSEMT) form a disordered region. At Lys-758 the chain carries N6-acetyllysine. Low complexity predominate over residues 763-791 (SSETESSFSSSADISKADVSSSPTPSSDL). Disordered stretches follow at residues 763-798 (SSET…DMLH), 828-864 (PAIT…DISE), and 885-912 (GRGS…RSKL). Residues 830-842 (ITKRKFSPGRPRS) are compositionally biased toward basic residues. Residues 845 to 856 (GAWSTHNTVSPP) show a composition bias toward polar residues. Residue Ser-854 is modified to Phosphoserine. 3 consecutive PHD-type zinc fingers follow at residues 957–1010 (QDMC…CTVC), 1007–1057 (CTVC…CVWC), and 1084–1139 (LSSC…CRPY). The segment at 1215–1324 (AVLQTPPDIQ…LPCRDDGWSE (110 aa)) is disordered. Residues 1224 to 1270 (QSEHSRDGEMDDSREGELMDCDGKSESSPEREAVDDETKGVEGTDGV) show a composition bias toward basic and acidic residues. Ser-1301 is modified (phosphoserine). The stretch at 1338 to 1366 (TESTEKIKKRYRKRKNKLEETFPAYLQEA) forms a coiled coil. Over residues 1406–1416 (PSLDPLLSSSS) the composition is skewed to low complexity. 2 disordered regions span residues 1406-1431 (PSLD…DDPL) and 1458-1485 (HSDI…PLSE). Residues 1467–1482 (DPSSLPQPNVNQSSRP) are compositionally biased toward polar residues. Lys-1508 carries the N6-acetyllysine modification. Disordered regions lie at residues 1604–1630 (FNPM…DTMS) and 1709–2448 (VQMS…SPVA). Composition is skewed to polar residues over residues 1610–1620 (DPNNSWTSSAP) and 1709–1727 (VQMS…SIDP). Residues 1729–1753 (SRIDSELFKDPLKQRESEHEQEWKF) show a composition bias toward basic and acidic residues. Residues 1754–1787 (RQQMRQKSKQQAKIEATQKLEQVKNEQQQQQQQQ) are a coiled coil. At Lys-1772 the chain carries N6-acetyllysine. Positions 1788–1823 (FGSQHLLVQSGSDTPSSGIQSPLTPQPGNGNMSPAQ) are enriched in polar residues. Residues 1851–1860 (QAPPPPPAPS) show a composition bias toward pro residues. A compositionally biased stretch (low complexity) spans 1861–1875 (RIPIQDSLSQAQTSQ). Over residues 1927–1945 (TPLSSVSRPLQMNETTANR) the composition is skewed to polar residues. Residue Ser-1987 is modified to Phosphoserine. Lys-2009 is subject to N6-acetyllysine. 4 stretches are compositionally biased toward polar residues: residues 2054–2065 (QDPYGSVSQASR), 2085–2094 (FSHNQSNDPY), 2115–2131 (AFSQ…QDPY), and 2144–2159 (SYSQ…TDPY). Low complexity predominate over residues 2173–2187 (PYSQQPQTPRPSTQT). Composition is skewed to polar residues over residues 2302–2319 (SPMT…SQTA), 2335–2353 (CASS…SGVS), and 2362–2375 (SGVT…NMAQ). Positions 2377 to 2389 (DTEKLRQRQKLRE) are enriched in basic and acidic residues. Residues 2390-2399 (IILQQQQQKK) show a composition bias toward low complexity. Asymmetric dimethylarginine is present on residues Arg-2454 and Arg-2571. Disordered stretches follow at residues 2589 to 2694 (RHGN…SDDP), 2793 to 2887 (EPKK…RETA), 2925 to 2954 (EKSD…VSSL), and 2989 to 3029 (VNPG…SGPQ). Polar residues-rich tracts occupy residues 2629 to 2645 (PPSQ…SSMV) and 2661 to 2682 (PLST…TQPS). The span at 2793–2811 (EPKKKEQENKTLVLSDKHS) shows a compositional bias: basic and acidic residues. N6-acetyllysine occurs at positions 2802 and 2809. The span at 2814 to 2832 (KKSTVTNEVKTEVLSPNSK) shows a compositional bias: polar residues. Ser-2828 is subject to Phosphoserine. Lys-2832 carries the N6-acetyllysine modification. Positions 2833 to 2849 (VESKCETEKNDENKDNV) are enriched in basic and acidic residues. Over residues 2851–2860 (TPCSQASAHS) the composition is skewed to polar residues. A compositionally biased stretch (basic and acidic residues) spans 2861-2884 (DLNDGEKTSLHPCDPDLFEKRTNR). Lys-2867 is subject to N6-acetyllysine. Residues 3011–3029 (TQTGPQTSQSGTSSMSGPQ) are compositionally biased toward low complexity. Coiled-coil stretches lie at residues 3054 to 3081 (LLQD…QRSE), 3173 to 3272 (NDSQ…QQQQ), and 3391 to 3433 (FSES…EMEQ). Positions 3205 to 3221 (HRKSKKALSAKQRTAKK) are enriched in basic residues. Disordered stretches follow at residues 3205-3241 (HRKS…TEQQ), 3353-3409 (PPIA…EQQE), 3527-3583 (PNFS…HSYP), 3596-3919 (IIPE…MANG), and 4024-4053 (VKEE…SRRN). Composition is skewed to basic and acidic residues over residues 3222 to 3238 (AGRE…KHVT) and 3395 to 3409 (FQER…EQQE). Composition is skewed to polar residues over residues 3527–3549 (PNFS…QSPV), 3564–3583 (ANSS…HSYP), 3637–3658 (ISET…QADQ), and 3684–3701 (LPNS…TYAN). The span at 3703–3725 (EVDKLSMETPAKTEEIKLEKAET) shows a compositional bias: basic and acidic residues. Residue Lys-3714 is modified to N6-acetyllysine. The residue at position 3758 (Ser-3758) is a Phosphoserine. Basic and acidic residues predominate over residues 3803-3812 (DCTKDNKLVE). Positions 3878–3892 (MYSSTDTFTHLKQQN) are enriched in polar residues. Over residues 3897 to 3911 (PPTPPASLPPTPPPM) the composition is skewed to pro residues. Ser-4034 is subject to Phosphoserine. At Arg-4139 the chain carries Asymmetric dimethylarginine. Residue Ser-4267 is modified to Phosphoserine. The segment at 4399-4439 (YRKCCFCHEEGDGLTDGPARLLNLDLDLWVHLNCALWSTEV) adopts a C2HC pre-PHD-type 2 zinc-finger fold. Residues 4460 to 4507 (MKCVFCHKTGATSGCHRFRCTNIYHFTCAIKAQCMFFKDKTMLCPMHK) form a PHD-type 8 zinc finger. In terms of domain architecture, FYR N-terminal spans 4545–4605 (DHTFRVGSLI…CRYLCSIEEK (61 aa)). Residues 4606-4691 (DGRPVFVIRI…EACENYTFRY (86 aa)) form the FYR C-terminal domain. A WDR5 interaction motif (WIN) motif is present at residues 4707–4712 (GCARSE). An SET domain is found at 4771–4887 (SNVYLARSRI…KGEELCYDYK (117 aa)). Residues Tyr-4825 and 4848–4849 (NH) contribute to the S-adenosyl-L-methionine site. Zn(2+) is bound by residues Cys-4851, Cys-4899, Cys-4901, and Cys-4906. A Post-SET domain is found at 4895-4911 (HKIPCHCGAVNCRKWMN).

Belongs to the class V-like SAM-binding methyltransferase superfamily. Histone-lysine methyltransferase family. TRX/MLL subfamily. In terms of assembly, component of the MLL3 complex (also named ASCOM complex), at least composed of catalytic subunit KMT2C/MLL3, ASH2L, RBBP5, WDR5, NCOA6, DPY30, KDM6A, PAXIP1/PTIP, PAGR1 and alpha- and beta-tubulin. Forms a core complex with the evolutionary conserved subcomplex WRAD composed of WDR5, RBBP5, ASH2L/ASH2 and DPY30 subunits; WRAD differentially stimulates the methyltransferase activity. Interacts (via WIN motif) with WDR5. As to expression, highly expressed in testis and ovary, followed by brain and liver. Also expressed in placenta, peripherical blood, fetal thymus, heart, lung and kidney. Within brain, expression was highest in hippocampus, caudate nucleus, and substantia nigra. Not detected in skeletal muscle and fetal liver.

The protein resides in the nucleus. It carries out the reaction L-lysyl(4)-[histone H3] + S-adenosyl-L-methionine = N(6)-methyl-L-lysyl(4)-[histone H3] + S-adenosyl-L-homocysteine + H(+). Histone methyltransferase that catalyzes methyl group transfer from S-adenosyl-L-methionine to the epsilon-amino group of 'Lys-4' of histone H3 (H3K4). Part of chromatin remodeling machinery predominantly forms H3K4me1 methylation marks at active chromatin sites where transcription and DNA repair take place. Likely plays a redundant role with KMT2D in enriching H3K4me1 mark on primed and active enhancer elements. The chain is Histone-lysine N-methyltransferase 2C (KMT2C) from Homo sapiens (Human).